Here is a 177-residue protein sequence, read N- to C-terminus: Peptide deformylase (177 aa).

Residues cysteine 99 and histidine 141 each contribute to the Fe cation site. Glutamate 142 is a catalytic residue. A Fe cation-binding site is contributed by histidine 145.

The protein belongs to the polypeptide deformylase family. The cofactor is Fe(2+).

It carries out the reaction N-terminal N-formyl-L-methionyl-[peptide] + H2O = N-terminal L-methionyl-[peptide] + formate. In terms of biological role, removes the formyl group from the N-terminal Met of newly synthesized proteins. Requires at least a dipeptide for an efficient rate of reaction. N-terminal L-methionine is a prerequisite for activity but the enzyme has broad specificity at other positions. The protein is Peptide deformylase of Rhizorhabdus wittichii (strain DSM 6014 / CCUG 31198 / JCM 15750 / NBRC 105917 / EY 4224 / RW1) (Sphingomonas wittichii).